We begin with the raw amino-acid sequence, 95 residues long: Small ribosomal subunit protein bS6 (95 aa).

This sequence belongs to the bacterial ribosomal protein bS6 family.

Binds together with bS18 to 16S ribosomal RNA. The sequence is that of Small ribosomal subunit protein bS6 from Bacillus pumilus (strain SAFR-032).